A 305-amino-acid chain; its full sequence is Probable 4-deoxy-4-formamido-L-arabinose-phosphoundecaprenol deformylase ArnD (305 aa).

The region spanning 7 to 262 (TKVGLRIDVD…QAKENNIEFV (256 aa)) is the NodB homology domain.

Belongs to the polysaccharide deacetylase family. ArnD deformylase subfamily.

It carries out the reaction 4-deoxy-4-formamido-alpha-L-arabinopyranosyl di-trans,octa-cis-undecaprenyl phosphate + H2O = 4-amino-4-deoxy-alpha-L-arabinopyranosyl di-trans,octa-cis-undecaprenyl phosphate + formate. The protein operates within glycolipid biosynthesis; 4-amino-4-deoxy-alpha-L-arabinose undecaprenyl phosphate biosynthesis; 4-amino-4-deoxy-alpha-L-arabinose undecaprenyl phosphate from UDP-4-deoxy-4-formamido-beta-L-arabinose and undecaprenyl phosphate: step 2/2. It functions in the pathway bacterial outer membrane biogenesis; lipopolysaccharide biosynthesis. In terms of biological role, catalyzes the deformylation of 4-deoxy-4-formamido-L-arabinose-phosphoundecaprenol to 4-amino-4-deoxy-L-arabinose-phosphoundecaprenol. The modified arabinose is attached to lipid A and is required for resistance to polymyxin and cationic antimicrobial peptides. This Shewanella sediminis (strain HAW-EB3) protein is Probable 4-deoxy-4-formamido-L-arabinose-phosphoundecaprenol deformylase ArnD.